A 95-amino-acid polypeptide reads, in one-letter code: Large ribosomal subunit protein uL23 (95 aa).

Belongs to the universal ribosomal protein uL23 family. Part of the 50S ribosomal subunit. Contacts protein L29.

Its function is as follows. Binds to 23S rRNA. One of the proteins that surrounds the polypeptide exit tunnel on the outside of the ribosome. In Methanopyrus kandleri (strain AV19 / DSM 6324 / JCM 9639 / NBRC 100938), this protein is Large ribosomal subunit protein uL23.